Here is a 503-residue protein sequence, read N- to C-terminus: Aspartyl/glutamyl-tRNA(Asn/Gln) amidotransferase subunit B (503 aa).

The protein belongs to the GatB/GatE family. GatB subfamily. Heterotrimer of A, B and C subunits.

The catalysed reaction is L-glutamyl-tRNA(Gln) + L-glutamine + ATP + H2O = L-glutaminyl-tRNA(Gln) + L-glutamate + ADP + phosphate + H(+). It catalyses the reaction L-aspartyl-tRNA(Asn) + L-glutamine + ATP + H2O = L-asparaginyl-tRNA(Asn) + L-glutamate + ADP + phosphate + 2 H(+). Its function is as follows. Allows the formation of correctly charged Asn-tRNA(Asn) or Gln-tRNA(Gln) through the transamidation of misacylated Asp-tRNA(Asn) or Glu-tRNA(Gln) in organisms which lack either or both of asparaginyl-tRNA or glutaminyl-tRNA synthetases. The reaction takes place in the presence of glutamine and ATP through an activated phospho-Asp-tRNA(Asn) or phospho-Glu-tRNA(Gln). The polypeptide is Aspartyl/glutamyl-tRNA(Asn/Gln) amidotransferase subunit B (Rhodococcus jostii (strain RHA1)).